Reading from the N-terminus, the 520-residue chain is Maturase K (520 aa).

This sequence belongs to the intron maturase 2 family. MatK subfamily.

It is found in the plastid. The protein resides in the chloroplast. In terms of biological role, usually encoded in the trnK tRNA gene intron. Probably assists in splicing its own and other chloroplast group II introns. This chain is Maturase K, found in Galanthus elwesii (Giant snowdrop).